The following is a 364-amino-acid chain: Mannose-1-phosphate guanyltransferase (364 aa).

The protein belongs to the transferase hexapeptide repeat family.

The protein localises to the cytoplasm. It carries out the reaction alpha-D-mannose 1-phosphate + GTP + H(+) = GDP-alpha-D-mannose + diphosphate. It participates in nucleotide-sugar biosynthesis; GDP-alpha-D-mannose biosynthesis; GDP-alpha-D-mannose from alpha-D-mannose 1-phosphate (GTP route): step 1/1. In terms of biological role, involved in cell wall synthesis where it is required for glycosylation. Involved in cell cycle progression through cell-size checkpoint. The polypeptide is Mannose-1-phosphate guanyltransferase (mpg1) (Aspergillus oryzae (strain ATCC 42149 / RIB 40) (Yellow koji mold)).